The following is a 1020-amino-acid chain: Glucan endo-1,3-beta-D-glucosidase (1020 aa).

A signal peptide spans 1–25 (MKGKNVQLLFALVVIILLFPTGASA). The beta-sandwich subdomain stretch occupies residues 28–251 (HAVSVGKGSY…ADYIAIAKLP (224 aa)). The GH81 domain maps to 28–722 (HAVSVGKGSY…HWIHNLAELG (695 aa)). Residues 252-350 (EKDGNMLAKF…EGKRFTTELT (99 aa)) form an alpha/beta subdomain region. The segment at 360–722 (DLGDYDRERL…HWIHNLAELG (363 aa)) is (alpha/beta)6 barrel subdomain. 11 residues coordinate (1,3-beta-D-glucosyl)n: Y387, K391, H458, D466, H470, D530, N540, E542, E546, E699, and R704. The active site involves D466. Residues E542 and E546 contribute to the active site. The interval 771 to 790 (HSFNIGNGDGPTNPDPSEPD) is disordered. A CBM6 domain is found at 796–922 (ERIQAEAYDA…LMNVNWFVFR (127 aa)). Residues E812, W825, D853, N878, D912, and N915 each coordinate (1,3-beta-D-glucosyl)n. Residues 928-1020 (NGDSHTHPDY…YTTEWFTYSR (93 aa)) enclose the CBM56 domain.

This sequence belongs to the glycosyl hydrolase 81 family.

The protein resides in the secreted. It carries out the reaction Hydrolysis of (1-&gt;3)-beta-D-glucosidic linkages in (1-&gt;3)-beta-D-glucans.. Its function is as follows. Cleaves internal linkages in 1,3-beta-glucan. May contribute to plant biomass degradation. In Halalkalibacterium halodurans (strain ATCC BAA-125 / DSM 18197 / FERM 7344 / JCM 9153 / C-125) (Bacillus halodurans), this protein is Glucan endo-1,3-beta-D-glucosidase.